The following is a 98-amino-acid chain: NADH-ubiquinone oxidoreductase chain 4L (98 aa).

A run of 3 helical transmembrane segments spans residues Met1–Met21, Ala29–Leu49, and Ile61–Val81.

The protein belongs to the complex I subunit 4L family. As to quaternary structure, core subunit of respiratory chain NADH dehydrogenase (Complex I) which is composed of 45 different subunits.

The protein resides in the mitochondrion inner membrane. It carries out the reaction a ubiquinone + NADH + 5 H(+)(in) = a ubiquinol + NAD(+) + 4 H(+)(out). Functionally, core subunit of the mitochondrial membrane respiratory chain NADH dehydrogenase (Complex I) which catalyzes electron transfer from NADH through the respiratory chain, using ubiquinone as an electron acceptor. Part of the enzyme membrane arm which is embedded in the lipid bilayer and involved in proton translocation. This Balaenoptera borealis (Sei whale) protein is NADH-ubiquinone oxidoreductase chain 4L (MT-ND4L).